A 1079-amino-acid polypeptide reads, in one-letter code: Psi-producing oxygenase A (1079 aa).

Residues 105 to 446 form a linoleate 8R-lipoxygenase region; it reads TNTFLTTLWN…DGSYDDNDLV (342 aa). H202 is a binding site for heme b. Y374 is a catalytic residue. H377 lines the heme b pocket. The interval 654 to 1079 is 9,12-octadecadienoate 8-hydroperoxide 8R-isomerase; that stretch reads QFINSHSACM…WDGDLPEVKE (426 aa).

The protein belongs to the peroxidase family. Homotetramer. Heme b is required as a cofactor.

The catalysed reaction is (9Z,12Z)-octadecadienoate + O2 = (8R,9Z,12Z)-8-hydroperoxyoctadeca-9,12-dienoate. The enzyme catalyses (8R,9Z,12Z)-8-hydroperoxyoctadeca-9,12-dienoate = (5S,8R,9Z,12Z)-5,8-dihydroxyoctadeca-9,12-dienoate. Functionally, bifunctional heme-containing enzyme that oxidizes linoleic acid to (8R,9Z,12Z)-8-hydroperoxyoctadeca-9,12-dienoate (within the N-terminal heme peroxidase domain), which is subsequently isomerized to (5S,8R,9Z,12Z)-5,8-dihydroxyoctadeca-9,12-dienoate (within the C-terminal P450 heme thiolate domain). Oxidized unsaturated fatty acids, so-called oxylipins, derived from endogenous fatty acids, influence the development of the asexual conidiophores and sexual cleistothecia and regulate the secondary metabolism. These substances were collectively named psi factors and are primarily a mixture of hydroxylated oleic, linoleic and alpha-linolenic acids. They are termed psi-beta, psi-alpha, and psi-gamma, respectively. Oxylipins may also serve as activators of mammalian immune responses contributing to enhanced resistance to opportunistic fungi and as factors that modulate fungal development contributing to resistance to host defenses. This chain is Psi-producing oxygenase A (ppoA), found in Aspergillus fumigatus (strain CBS 144.89 / FGSC A1163 / CEA10) (Neosartorya fumigata).